The chain runs to 505 residues: Cysteine--tRNA ligase (505 aa).

Cysteine 33 lines the Zn(2+) pocket. Residues 35-45 carry the 'HIGH' region motif; the sequence is PTVYDFAHIGN. Residues cysteine 229, histidine 268, and glutamate 272 each coordinate Zn(2+). The 'KMSKS' region motif lies at 301–305; sequence KMSKS. Lysine 304 is an ATP binding site.

Belongs to the class-I aminoacyl-tRNA synthetase family. In terms of assembly, monomer. The cofactor is Zn(2+).

It is found in the cytoplasm. The catalysed reaction is tRNA(Cys) + L-cysteine + ATP = L-cysteinyl-tRNA(Cys) + AMP + diphosphate. The sequence is that of Cysteine--tRNA ligase from Brucella anthropi (strain ATCC 49188 / DSM 6882 / CCUG 24695 / JCM 21032 / LMG 3331 / NBRC 15819 / NCTC 12168 / Alc 37) (Ochrobactrum anthropi).